We begin with the raw amino-acid sequence, 381 residues long: Layilin (381 aa).

The first 24 residues, 1-24 (MQPGAALQAMLLAVLLAKPRDSKG), serve as a signal peptide directing secretion. Topologically, residues 25–235 (RLLSASDLDP…ERREAALNLA (211 aa)) are extracellular. Residues 45 to 185 (TRRPCYKVIY…CNMKNNFICK (141 aa)) form the C-type lectin domain. 2 disulfide bridges follow: C71–C184 and C150–C176. A glycan (N-linked (GlcNAc...) asparagine) is linked at N117. The helical transmembrane segment at 236 to 256 (YILIPSIPLFLLLVVTSAVCW) threads the bilayer. The Cytoplasmic portion of the chain corresponds to 257–381 (VWICRRKREQ…SGWVENEIYY (125 aa)). A phosphoserine mark is found at S286 and S299. Residues 330 to 374 (DYENIAVNPSESGFVTLASMESGFVTNDIYEFSPDRMGRSKESGW) are interaction with NF2. The tract at residues 337–381 (NPSESGFVTLASMESGFVTNDIYEFSPDRMGRSKESGWVENEIYY) is interaction with TLN1. A run of 5 repeats spans residues 340–344 (ESGFV), 350–354 (ESGFV), 356–359 (NDIY), 371–375 (ESGWV), and 377–380 (NEIY). A 3 X 5 AA repeats of E-S-G-X-V region spans residues 340 to 375 (ESGFVTLASMESGFVTNDIYEFSPDRMGRSKESGWV). Residues 356–380 (NDIYEFSPDRMGRSKESGWVENEIY) form a 2 X 4 AA repeats of N-X-I-Y region.

As to quaternary structure, interacts with TLN1. Interacts with NF2 and RDX.

The protein localises to the membrane. Functionally, receptor for hyaluronate. This chain is Layilin (Layn), found in Mus musculus (Mouse).